Here is a 156-residue protein sequence, read N- to C-terminus: MNINLTLIGQSLTFIAFILFCMKYVWPQLIAMMEEREKRIAEGLEAADRADKDLELAQKKAGKQLTEAKEQAATIVEQANKRGNQIVEEAKEAAVAEGERIKAAAQAEIERQVAQAREELRGKVAALAIQGAEKVLGTTVDAKAHSEMLDKLAAEL.

The chain crosses the membrane as a helical span at residues 7–29 (LIGQSLTFIAFILFCMKYVWPQL).

This sequence belongs to the ATPase B chain family. F-type ATPases have 2 components, F(1) - the catalytic core - and F(0) - the membrane proton channel. F(1) has five subunits: alpha(3), beta(3), gamma(1), delta(1), epsilon(1). F(0) has three main subunits: a(1), b(2) and c(10-14). The alpha and beta chains form an alternating ring which encloses part of the gamma chain. F(1) is attached to F(0) by a central stalk formed by the gamma and epsilon chains, while a peripheral stalk is formed by the delta and b chains.

It is found in the cell inner membrane. In terms of biological role, f(1)F(0) ATP synthase produces ATP from ADP in the presence of a proton or sodium gradient. F-type ATPases consist of two structural domains, F(1) containing the extramembraneous catalytic core and F(0) containing the membrane proton channel, linked together by a central stalk and a peripheral stalk. During catalysis, ATP synthesis in the catalytic domain of F(1) is coupled via a rotary mechanism of the central stalk subunits to proton translocation. Its function is as follows. Component of the F(0) channel, it forms part of the peripheral stalk, linking F(1) to F(0). This chain is ATP synthase subunit b, found in Saccharophagus degradans (strain 2-40 / ATCC 43961 / DSM 17024).